Consider the following 192-residue polypeptide: uncharacterized protein (192 aa).

The Nudix hydrolase domain maps to glutamine 29–serine 160. Positions glycine 67–alanine 89 match the Nudix box motif. Positions 83 and 87 each coordinate Mg(2+).

Belongs to the Nudix hydrolase family. PCD1 subfamily. It depends on Mn(2+) as a cofactor. Mg(2+) is required as a cofactor.

Its function is as follows. Probably mediates the hydrolysis of some nucleoside diphosphate derivatives. This is an uncharacterized protein from Salmonella agona (strain SL483).